The primary structure comprises 382 residues: Dual-specificity RNA methyltransferase RlmN (382 aa).

E91 functions as the Proton acceptor in the catalytic mechanism. The Radical SAM core domain occupies 97–339 (ETDRGTLCIS…TTVRKTRGDD (243 aa)). A disulfide bridge links C104 with C344. 3 residues coordinate [4Fe-4S] cluster: C111, C115, and C118. S-adenosyl-L-methionine contacts are provided by residues 165 to 166 (GE), S197, 219 to 221 (SLH), and N301. C344 acts as the S-methylcysteine intermediate in catalysis.

The protein belongs to the radical SAM superfamily. RlmN family. It depends on [4Fe-4S] cluster as a cofactor.

It localises to the cytoplasm. The enzyme catalyses adenosine(2503) in 23S rRNA + 2 reduced [2Fe-2S]-[ferredoxin] + 2 S-adenosyl-L-methionine = 2-methyladenosine(2503) in 23S rRNA + 5'-deoxyadenosine + L-methionine + 2 oxidized [2Fe-2S]-[ferredoxin] + S-adenosyl-L-homocysteine. It catalyses the reaction adenosine(37) in tRNA + 2 reduced [2Fe-2S]-[ferredoxin] + 2 S-adenosyl-L-methionine = 2-methyladenosine(37) in tRNA + 5'-deoxyadenosine + L-methionine + 2 oxidized [2Fe-2S]-[ferredoxin] + S-adenosyl-L-homocysteine. Functionally, specifically methylates position 2 of adenine 2503 in 23S rRNA and position 2 of adenine 37 in tRNAs. m2A2503 modification seems to play a crucial role in the proofreading step occurring at the peptidyl transferase center and thus would serve to optimize ribosomal fidelity. This is Dual-specificity RNA methyltransferase RlmN from Polaromonas naphthalenivorans (strain CJ2).